We begin with the raw amino-acid sequence, 176 residues long: Sigma intracellular receptor 2 (176 aa).

The Cytoplasmic segment spans residues 1-9 (MGTLGARRG). A helical transmembrane segment spans residues 10-30 (LEWFLGFYFLSHIPITLLMDL). Positions 10–158 (LEWFLGFYFL…PYFLIPLILL (149 aa)) constitute an EXPERA domain. The Lumenal segment spans residues 31–68 (QGVLPRDLYPVELRNLQQWYIEEFKDPLLQTPPAWFKS). Residues 69-89 (FLFCELVFQLPFFPIAAYAFF) form a helical membrane-spanning segment. Positions 75 and 77 each coordinate cholesterol. The Cytoplasmic portion of the chain corresponds to 90–99 (KGGCKWIRTP). A helical membrane pass occupies residues 100–120 (AIIYSVHTMTTLIPILSTLLL). The Lumenal portion of the chain corresponds to 121-141 (DDFSKASHFRGQGPKTFQERL). A helical transmembrane segment spans residues 142–162 (FLISVYIPYFLIPLILLLFMV). Topologically, residues 163-176 (RNPYYKSEEKRKKK) are cytoplasmic. The short motif at 172–176 (KRKKK) is the ER retention motif element.

This sequence belongs to the TMEM97/sigma-2 receptor family. Homodimer. Interacts with NPC1; the interaction impairs NPC1-mediated cholesterol transport. Interacts with PGRMC1 and LDLR; the interaction increases LDL internalization. Interacts with histatin 1/HTN1; the interaction induces HTN1-stimulating wound healing. Interacts with TSPO.

The protein localises to the rough endoplasmic reticulum membrane. Its subcellular location is the nucleus membrane. In terms of biological role, sigma-2 receptor which contributes to ameliorate dysfunctional cellular processes and slow degenerative progression by regulating cell functions including cholesterol biosynthesis/trafficking, membrane trafficking, autophagy, lipid membrane-bound protein trafficking, and receptor stabilization at the cell surface. Forms a ternary complex with PGRMC1 receptor and low density lipoprotein receptor/LDLR at the plasma membrane, which increases LDLR-mediated LDL cholesterol internalization. Decreases lysosomal sterol transporter NPC1 availability to the cell, probably through NPC1-binding, hence controlling lipid transport, including cholesterol and LBPA, outside of late endosome/lysosome. Binds regio- and stereoselective ligand 20(S)-hydroxycholesterol (20(S)-OHC) which enhances TMEM97-NPC1 interaction and decreases TMEM97-PGRMC1 and TMEM97-TSPO interactions, thereby linking OHC binding to cholesterol homeostasis. Also able to bind cholesterol. Binds histatin 1 (Hst 1)/HN1 salivary peptide at the ER membrane, which is critical for increasing mitochondria-ER contacts and stimulating Hst1 wound healing properties. May alter the activity of some cytochrome P450 proteins. Although shows homologies with sterol isomerases (EXPERA domain), not able to catalyze sterol isomerization. However, may act as sensors of these molecules. Acts as a quality control factor in the ER, promoting the proteolytic degradation of nonproductive and extramitochondrial precursor proteins in the ER membrane thus removing them from the ER surface. The polypeptide is Sigma intracellular receptor 2 (TMEM97) (Bos taurus (Bovine)).